The chain runs to 63 residues: Small ribosomal subunit protein eS31 (63 aa).

Positions 31, 34, 50, and 53 each coordinate Zn(2+). The segment at cysteine 31–cysteine 53 adopts a C4-type zinc-finger fold.

It belongs to the eukaryotic ribosomal protein eS31 family. Part of the 30S ribosomal subunit. Zn(2+) serves as cofactor.

The polypeptide is Small ribosomal subunit protein eS31 (Sulfurisphaera tokodaii (strain DSM 16993 / JCM 10545 / NBRC 100140 / 7) (Sulfolobus tokodaii)).